Reading from the N-terminus, the 78-residue chain is Major outer membrane lipoprotein Lpp (78 aa).

An N-terminal signal peptide occupies residues 1 to 20 (MNRTKIVLGAVVLASTLLAG). The N-palmitoyl cysteine moiety is linked to residue cysteine 21. Residue cysteine 21 is the site of S-diacylglycerol cysteine attachment. 2 consecutive repeats follow at residues 24–34 (TAKVDQLTSDI) and 38–48 (NAKVDQLSNDV). A coiled-coil region spans residues 27 to 75 (VDQLTSDIQTLNAKVDQLSNDVNAVHTDVQAAKDDAARANQRLDNQVRS). The residue at position 78 (lysine 78) is an N6-murein peptidoglycan lysine.

Belongs to the Lpp family. In terms of assembly, homotrimer.

The protein localises to the cell outer membrane. It is found in the secreted. The protein resides in the cell wall. Its function is as follows. A highly abundant outer membrane lipoprotein that controls the distance between the inner and outer membranes. The only protein known to be covalently linked to the peptidoglycan network (PGN). Also non-covalently binds the PGN. The link between the cell outer membrane and PGN contributes to maintenance of the structural and functional integrity of the cell envelope, and maintains the correct distance between the PGN and the outer membrane. The chain is Major outer membrane lipoprotein Lpp from Photorhabdus laumondii subsp. laumondii (strain DSM 15139 / CIP 105565 / TT01) (Photorhabdus luminescens subsp. laumondii).